Consider the following 333-residue polypeptide: Cytochrome f (333 aa).

A signal peptide spans 1-44; the sequence is MRNASVTARLTRSVRAIVKTLLIAIATVTFYFSCDLALPQSAAA. The heme site is built by tyrosine 45, cysteine 66, cysteine 69, and histidine 70. The helical transmembrane segment at 301–318 threads the bilayer; sequence GLIAFVALVMLAQVMLVL.

This sequence belongs to the cytochrome f family. In terms of assembly, the 4 large subunits of the cytochrome b6-f complex are cytochrome b6, subunit IV (17 kDa polypeptide, PetD), cytochrome f and the Rieske protein, while the 4 small subunits are PetG, PetL, PetM and PetN. The complex functions as a dimer. Heme is required as a cofactor.

The protein localises to the cellular thylakoid membrane. Functionally, component of the cytochrome b6-f complex, which mediates electron transfer between photosystem II (PSII) and photosystem I (PSI), cyclic electron flow around PSI, and state transitions. The chain is Cytochrome f (petA) from Desmonostoc sp. (strain PCC 7906) (Nostoc sp. (strain PCC 7906)).